We begin with the raw amino-acid sequence, 515 residues long: Microtubule-associated protein 70-4 (515 aa).

Coiled coils occupy residues 26–106 and 136–351; these read VVDE…ALSA and LESD…NTSA. Residues 208–410 form a required for targeting to microtubules region; the sequence is LLEKSNRQQV…KQPGSETEAA (203 aa). Residues 340–515 are disordered; that stretch reads DDMRNESSNT…VKSTKDSCEI (176 aa). Over residues 345–362 the composition is skewed to polar residues; the sequence is ESSNTSASNKDNATSKQA. Low complexity predominate over residues 364-374; sequence PKRSSSQPRRP. Basic and acidic residues-rich tracts occupy residues 409–425, 450–461, and 484–515; these read AAEKNRHAAAKRFDSPR, KVADDAGKENKE, and SEHEEAMDLRKLDEGKADDSDAVKSTKDSCEI.

It belongs to the MAP70 family.

It is found in the cytoplasm. The protein resides in the cytoskeleton. In terms of biological role, plant-specific protein that interact with microtubules. The polypeptide is Microtubule-associated protein 70-4 (MAP70.4) (Oryza sativa subsp. japonica (Rice)).